Consider the following 416-residue polypeptide: Multifunctional CCA protein (416 aa).

ATP-binding residues include glycine 8 and arginine 11. CTP is bound by residues glycine 8 and arginine 11. The Mg(2+) site is built by aspartate 21 and aspartate 23. 3 residues coordinate ATP: arginine 91, arginine 137, and arginine 140. CTP contacts are provided by arginine 91, arginine 137, and arginine 140. In terms of domain architecture, HD spans 228 to 335; it reads SFIHTMLVLK…ITLFNRFDVW (108 aa).

This sequence belongs to the tRNA nucleotidyltransferase/poly(A) polymerase family. Bacterial CCA-adding enzyme type 1 subfamily. As to quaternary structure, monomer. Can also form homodimers and oligomers. It depends on Mg(2+) as a cofactor. Requires Ni(2+) as cofactor.

The catalysed reaction is a tRNA precursor + 2 CTP + ATP = a tRNA with a 3' CCA end + 3 diphosphate. It carries out the reaction a tRNA with a 3' CCA end + 2 CTP + ATP = a tRNA with a 3' CCACCA end + 3 diphosphate. Its function is as follows. Catalyzes the addition and repair of the essential 3'-terminal CCA sequence in tRNAs without using a nucleic acid template. Adds these three nucleotides in the order of C, C, and A to the tRNA nucleotide-73, using CTP and ATP as substrates and producing inorganic pyrophosphate. tRNA 3'-terminal CCA addition is required both for tRNA processing and repair. Also involved in tRNA surveillance by mediating tandem CCA addition to generate a CCACCA at the 3' terminus of unstable tRNAs. While stable tRNAs receive only 3'-terminal CCA, unstable tRNAs are marked with CCACCA and rapidly degraded. The protein is Multifunctional CCA protein of Haemophilus influenzae (strain PittGG).